Here is a 582-residue protein sequence, read N- to C-terminus: DNA mismatch repair protein MutL (582 aa).

This sequence belongs to the DNA mismatch repair MutL/HexB family.

Functionally, this protein is involved in the repair of mismatches in DNA. It is required for dam-dependent methyl-directed DNA mismatch repair. May act as a 'molecular matchmaker', a protein that promotes the formation of a stable complex between two or more DNA-binding proteins in an ATP-dependent manner without itself being part of a final effector complex. The polypeptide is DNA mismatch repair protein MutL (Buchnera aphidicola subsp. Schizaphis graminum (strain Sg)).